Reading from the N-terminus, the 563-residue chain is Arginine--tRNA ligase (563 aa).

The 'HIGH' region signature appears at 120 to 130 (PNIAKPFHIGH).

The protein belongs to the class-I aminoacyl-tRNA synthetase family. As to quaternary structure, monomer.

The protein resides in the cytoplasm. The catalysed reaction is tRNA(Arg) + L-arginine + ATP = L-arginyl-tRNA(Arg) + AMP + diphosphate. The sequence is that of Arginine--tRNA ligase from Clostridium botulinum (strain ATCC 19397 / Type A).